The chain runs to 305 residues: Chromatin modification-related protein png2 (305 aa).

The disordered stretch occupies residues 135 to 239 (TVTPQTSERR…PLVKHDTLDS (105 aa)). Over residues 153 to 167 (NQHSQQYSSQERSSS) the composition is skewed to low complexity. Composition is skewed to polar residues over residues 168 to 183 (YNNF…SYHT) and 195 to 210 (KSSS…APQS). Tyrosine 181 carries the post-translational modification Phosphotyrosine. Threonine 183 carries the post-translational modification Phosphothreonine. A phosphoserine mark is found at serine 197 and serine 198. Basic and acidic residues predominate over residues 211-223 (TERRPVRRSESRL). The PHD-type zinc-finger motif lies at 248 to 297 (QLYCYCQQVSYGQMIGCDNENCKREWFHLPCVGLVEPPKGIWYCKECEEL). Zn(2+) is bound by residues cysteine 251, cysteine 253, cysteine 264, cysteine 269, histidine 275, cysteine 278, cysteine 291, and cysteine 294.

This sequence belongs to the ING family. In terms of assembly, interacts with H3K4me3 and to a lesser extent with H3K4me2. Component of the clr6 histone deacetylase complex I'composed of at least clr6, png2, prw1, pst1 and sds3.

It is found in the cytoplasm. The protein localises to the nucleus. Component of the clr6 histone deacetylase complex I' responsible for the deacetylation of lysine residues on the N-terminal part of the core histones (H2A, H2B, H3 and H4). Histone deacetylation gives a tag for epigenetic repression and plays an important role in transcriptional regulation, cell cycle progression and developmental events. Has a role in silencing of mating type genes. The chain is Chromatin modification-related protein png2 (png2) from Schizosaccharomyces pombe (strain 972 / ATCC 24843) (Fission yeast).